Here is a 206-residue protein sequence, read N- to C-terminus: Thymidylate kinase (206 aa).

An ATP-binding site is contributed by 11-18 (GIDGAGKT).

It belongs to the thymidylate kinase family.

It catalyses the reaction dTMP + ATP = dTDP + ADP. Functionally, phosphorylation of dTMP to form dTDP in both de novo and salvage pathways of dTTP synthesis. The polypeptide is Thymidylate kinase (Burkholderia thailandensis (strain ATCC 700388 / DSM 13276 / CCUG 48851 / CIP 106301 / E264)).